Here is a 313-residue protein sequence, read N- to C-terminus: Aspartate carbamoyltransferase catalytic subunit (313 aa).

The carbamoyl phosphate site is built by Arg58 and Thr59. Residue Lys86 participates in L-aspartate binding. Carbamoyl phosphate-binding residues include Arg108, His136, and Gln139. L-aspartate is bound by residues Arg169 and Arg224. 2 residues coordinate carbamoyl phosphate: Gly265 and Pro266.

This sequence belongs to the aspartate/ornithine carbamoyltransferase superfamily. ATCase family. Heterododecamer (2C3:3R2) of six catalytic PyrB chains organized as two trimers (C3), and six regulatory PyrI chains organized as three dimers (R2).

The catalysed reaction is carbamoyl phosphate + L-aspartate = N-carbamoyl-L-aspartate + phosphate + H(+). It functions in the pathway pyrimidine metabolism; UMP biosynthesis via de novo pathway; (S)-dihydroorotate from bicarbonate: step 2/3. Its function is as follows. Catalyzes the condensation of carbamoyl phosphate and aspartate to form carbamoyl aspartate and inorganic phosphate, the committed step in the de novo pyrimidine nucleotide biosynthesis pathway. This Natranaerobius thermophilus (strain ATCC BAA-1301 / DSM 18059 / JW/NM-WN-LF) protein is Aspartate carbamoyltransferase catalytic subunit.